Consider the following 202-residue polypeptide: FMN-dependent NADH:quinone oxidoreductase (202 aa).

FMN-binding positions include S10 and 95-98; that span reads MYNF.

Belongs to the azoreductase type 1 family. In terms of assembly, homodimer. FMN serves as cofactor.

It catalyses the reaction 2 a quinone + NADH + H(+) = 2 a 1,4-benzosemiquinone + NAD(+). It carries out the reaction N,N-dimethyl-1,4-phenylenediamine + anthranilate + 2 NAD(+) = 2-(4-dimethylaminophenyl)diazenylbenzoate + 2 NADH + 2 H(+). Functionally, quinone reductase that provides resistance to thiol-specific stress caused by electrophilic quinones. Its function is as follows. Also exhibits azoreductase activity. Catalyzes the reductive cleavage of the azo bond in aromatic azo compounds to the corresponding amines. The protein is FMN-dependent NADH:quinone oxidoreductase of Pseudoalteromonas atlantica (strain T6c / ATCC BAA-1087).